The chain runs to 281 residues: Large ribosomal subunit protein uL2 (281 aa).

The segment at 208 to 281 is disordered; that stretch reads AGRSRYAGQR…RGRKRGPHTR (74 aa). The span at 254 to 281 shows a compositional bias: basic residues; it reads TVGKKTRSHKARSNKFIVRGRKRGPHTR.

This sequence belongs to the universal ribosomal protein uL2 family. In terms of assembly, part of the 50S ribosomal subunit. Forms a bridge to the 30S subunit in the 70S ribosome.

In terms of biological role, one of the primary rRNA binding proteins. Required for association of the 30S and 50S subunits to form the 70S ribosome, for tRNA binding and peptide bond formation. It has been suggested to have peptidyltransferase activity; this is somewhat controversial. Makes several contacts with the 16S rRNA in the 70S ribosome. The chain is Large ribosomal subunit protein uL2 from Limosilactobacillus fermentum (strain NBRC 3956 / LMG 18251) (Lactobacillus fermentum).